Consider the following 1935-residue polypeptide: Myosin-7 (1935 aa).

One can recognise a Myosin N-terminal SH3-like domain in the interval 32–81; it reads DLKKDVFVPDDKQEFVKAKIVSREGGKVTAETEYGKTVTVKEDQVMQQNP. The Myosin motor domain maps to 85–778; the sequence is DKIEDMAMLT…LLGLLEEMRD (694 aa). K129 carries the post-translational modification N6,N6,N6-trimethyllysine. Residue 178–185 participates in ATP binding; it reads GESGAGKT. T378 is subject to Phosphothreonine. Actin-binding stretches follow at residues 655-677 and 757-771; these read LNKL…IPNE and KFGH…GLLG. The IQ domain occupies 781 to 810; sequence LSRIITRIQAQSRGVLARMEYKKLLERRDS. A coiled-coil region spans residues 839–1935; the sequence is LLKSAEREKE…DIGTKGLNEE (1097 aa). Residues S1137 and S1269 each carry the phosphoserine modification. At T1282 the chain carries Phosphothreonine. A Phosphotyrosine modification is found at Y1308. T1309 is modified (phosphothreonine). The residue at position 1510 (S1510) is a Phosphoserine. Phosphothreonine is present on T1513. The segment at 1907 to 1935 is disordered; the sequence is EERADIAESQVNKLRAKSRDIGTKGLNEE. A compositionally biased stretch (basic and acidic residues) spans 1923-1935; that stretch reads KSRDIGTKGLNEE.

It belongs to the TRAFAC class myosin-kinesin ATPase superfamily. Myosin family. As to quaternary structure, muscle myosin is a hexameric protein that consists of 2 heavy chain subunits (MHC), 2 alkali light chain subunits (MLC) and 2 regulatory light chain subunits (MLC-2). Interacts with ECPAS. Interacts (via C-terminus) with LRRC39. Both wild type and variant Gln-403 are detected in skeletal muscle (at protein level).

The protein resides in the cytoplasm. Its subcellular location is the myofibril. It is found in the sarcomere. Functionally, myosins are actin-based motor molecules with ATPase activity essential for muscle contraction. Forms regular bipolar thick filaments that, together with actin thin filaments, constitute the fundamental contractile unit of skeletal and cardiac muscle. This is Myosin-7 (MYH7) from Homo sapiens (Human).